Reading from the N-terminus, the 510-residue chain is MTEAFSAIHELGGIRGIGGIRGIRRSSYWQQKFLYLFLFQDHFYGIVYNSFVNESEYVRNTTIHGLTYGFNFVMLKHLMKKLHQSQSPSILFDELTNQSQFVREILMIASNPILQPRSRDSAGRINEWNGYQSIHSVFPFIEDRIHNPSNYLDITIPHCVHPEILIRICRKHILDISFLHLLRLMLHTSNHFRIPNSSNRVINLFYRFLWNFCTQSIEYCLIHLWKQIYKFQCTPFWFLFDKTEFIRKIQSVSKKSNPRPDRTISRKNCLIHYVRSQNHLILVIDGEGDFESIKDWKILFIILWSKYLHSWLDPCRISVKNLSNNPLSILGYILYTKNDLIKIRIRFFDFSINTSLVIKGFCGIIPIISLIRSLAKEGFCNTSGRPICKLSWTTLTDNEIIYRFDRIMRNIFYYYSGCCKKKGLYQLQYIFRFSCAKTLACRHKSTIRTVWKRYGSNFARNYVVLEGVKSIPSNLWQRESDEKRFWCLTITQTNFLADLLRKSKNIYSVG.

It belongs to the intron maturase 2 family. MatK subfamily.

It is found in the plastid. Its function is as follows. Usually encoded in the trnK tRNA gene intron. Probably assists in splicing its own and other chloroplast group II introns. This Aneura mirabilis (Parasitic liverwort) protein is Maturase K.